The chain runs to 266 residues: uncharacterized protein (266 aa).

The first 22 residues, 1-22 (MGYFKRVVLYIIVMVVSVFIIG), serve as a signal peptide directing secretion. A lipid anchor (N-palmitoyl cysteine) is attached at cysteine 23. Cysteine 23 is lipidated: S-diacylglycerol cysteine.

Belongs to the staphylococcal tandem lipoprotein family.

The protein resides in the cell membrane. This is an uncharacterized protein from Staphylococcus aureus (strain N315).